Reading from the N-terminus, the 354-residue chain is Variable large protein 15/16 (354 aa).

An N-terminal signal peptide occupies residues 1–18; that stretch reads MRKRISAIIMTLFMVLVS. The N-palmitoyl cysteine moiety is linked to residue Cys-19. Cys-19 carries S-diacylglycerol cysteine lipidation. Residues 333–354 form a disordered region; that stretch reads EDKSVEATNTAEATTSGQQAKN. Residues 338-354 are compositionally biased toward polar residues; that stretch reads EATNTAEATTSGQQAKN.

The protein belongs to the variable large protein (Vlp) family. Delta subfamily.

It localises to the cell outer membrane. In terms of biological role, the Vlp and Vsp proteins are antigenically distinct proteins, only one vlp or vsp gene is transcriptionally active at any one time. Switching between these genes is a mechanism of host immune response evasion. The chain is Variable large protein 15/16 from Borrelia hermsii.